A 328-amino-acid chain; its full sequence is tRNA uridine(34) hydroxylase (328 aa).

The Rhodanese domain maps to 130 to 224 (LDEDTIVLDT…YGKDPEVQGE (95 aa)). The active-site Cysteine persulfide intermediate is the Cys-184.

It belongs to the TrhO family.

The catalysed reaction is uridine(34) in tRNA + AH2 + O2 = 5-hydroxyuridine(34) in tRNA + A + H2O. Its function is as follows. Catalyzes oxygen-dependent 5-hydroxyuridine (ho5U) modification at position 34 in tRNAs. This is tRNA uridine(34) hydroxylase from Streptococcus uberis (strain ATCC BAA-854 / 0140J).